Consider the following 426-residue polypeptide: Glutamyl-tRNA reductase (426 aa).

Residues 52-55 (TCNR), Ser-110, 115-117 (EYE), and Gln-121 each bind substrate. The active-site Nucleophile is the Cys-53. Residue 190 to 195 (GAGEMA) coordinates NADP(+).

It belongs to the glutamyl-tRNA reductase family. In terms of assembly, homodimer.

The enzyme catalyses (S)-4-amino-5-oxopentanoate + tRNA(Glu) + NADP(+) = L-glutamyl-tRNA(Glu) + NADPH + H(+). It participates in porphyrin-containing compound metabolism; protoporphyrin-IX biosynthesis; 5-aminolevulinate from L-glutamyl-tRNA(Glu): step 1/2. Catalyzes the NADPH-dependent reduction of glutamyl-tRNA(Glu) to glutamate 1-semialdehyde (GSA). This Saccharolobus solfataricus (strain ATCC 35092 / DSM 1617 / JCM 11322 / P2) (Sulfolobus solfataricus) protein is Glutamyl-tRNA reductase.